Reading from the N-terminus, the 297-residue chain is Homeobox protein HMX3 (297 aa).

2 disordered regions span residues 24 to 43 and 96 to 172; these read NSDS…KAGL and AAQK…RKKK. Basic and acidic residues-rich tracts occupy residues 109–123 and 145–166; these read TDRD…SDPD and EDGK…ADKK. A DNA-binding region (homeobox) is located at residues 170–229; sequence KKKTRTVFSRSQVFQLESTFDMKRYLSSSERAGLAASLHLTETQVKIWFQNRRNKWKRQL.

It belongs to the HMX homeobox family. As to expression, expressed in the ear placode and vesicle and in cells forming the vestibulo-acoustic ganglion. Also expressed in the lateral line.

Its subcellular location is the nucleus. In terms of biological role, transcription factor involved in specification of neuronal cell types and which is required for inner ear and hypothalamus development. Binds to the 5'-CAAGTG-3' core sequence. The protein is Homeobox protein HMX3 (hmx3) of Danio rerio (Zebrafish).